The primary structure comprises 286 residues: ATP synthase gamma chain (286 aa).

Belongs to the ATPase gamma chain family. As to quaternary structure, F-type ATPases have 2 components, CF(1) - the catalytic core - and CF(0) - the membrane proton channel. CF(1) has five subunits: alpha(3), beta(3), gamma(1), delta(1), epsilon(1). CF(0) has three main subunits: a, b and c.

The protein localises to the cell inner membrane. Produces ATP from ADP in the presence of a proton gradient across the membrane. The gamma chain is believed to be important in regulating ATPase activity and the flow of protons through the CF(0) complex. The protein is ATP synthase gamma chain of Alcanivorax borkumensis (strain ATCC 700651 / DSM 11573 / NCIMB 13689 / SK2).